A 367-amino-acid polypeptide reads, in one-letter code: Peptide chain release factor 2 (367 aa).

Q254 is modified (N5-methylglutamine).

It belongs to the prokaryotic/mitochondrial release factor family. Methylated by PrmC. Methylation increases the termination efficiency of RF2.

The protein resides in the cytoplasm. Peptide chain release factor 2 directs the termination of translation in response to the peptide chain termination codons UGA and UAA. The polypeptide is Peptide chain release factor 2 (Bordetella avium (strain 197N)).